A 450-amino-acid polypeptide reads, in one-letter code: Trigger factor (450 aa).

The 87-residue stretch at 163 to 249 folds into the PPIase FKBP-type domain; sequence EDFVLIDYQG…LKEIQEQILP (87 aa). Positions 431 to 443 are enriched in acidic residues; the sequence is PEVETEVSESAAD. The segment at 431–450 is disordered; the sequence is PEVETEVSESAADVEDKTDQ.

The protein belongs to the FKBP-type PPIase family. Tig subfamily.

The protein localises to the cytoplasm. The catalysed reaction is [protein]-peptidylproline (omega=180) = [protein]-peptidylproline (omega=0). Its function is as follows. Involved in protein export. Acts as a chaperone by maintaining the newly synthesized protein in an open conformation. Functions as a peptidyl-prolyl cis-trans isomerase. The polypeptide is Trigger factor (Desulforapulum autotrophicum (strain ATCC 43914 / DSM 3382 / VKM B-1955 / HRM2) (Desulfobacterium autotrophicum)).